The following is a 336-amino-acid chain: Glycerol-3-phosphate dehydrogenase [NAD(P)+] (336 aa).

Residues S16, Y17, H37, and K111 each contribute to the NADPH site. 3 residues coordinate sn-glycerol 3-phosphate: K111, G140, and T142. A144 provides a ligand contact to NADPH. Sn-glycerol 3-phosphate is bound by residues K196, D249, S259, R260, and N261. K196 functions as the Proton acceptor in the catalytic mechanism. R260 contacts NADPH. Residues V284 and E286 each contribute to the NADPH site.

Belongs to the NAD-dependent glycerol-3-phosphate dehydrogenase family.

The protein resides in the cytoplasm. The enzyme catalyses sn-glycerol 3-phosphate + NAD(+) = dihydroxyacetone phosphate + NADH + H(+). It carries out the reaction sn-glycerol 3-phosphate + NADP(+) = dihydroxyacetone phosphate + NADPH + H(+). It participates in membrane lipid metabolism; glycerophospholipid metabolism. In terms of biological role, catalyzes the reduction of the glycolytic intermediate dihydroxyacetone phosphate (DHAP) to sn-glycerol 3-phosphate (G3P), the key precursor for phospholipid synthesis. The chain is Glycerol-3-phosphate dehydrogenase [NAD(P)+] from Actinobacillus pleuropneumoniae serotype 3 (strain JL03).